A 447-amino-acid polypeptide reads, in one-letter code: Protein CLT1, chloroplastic (447 aa).

The transit peptide at 1–48 (MATTSSDRLIAGLTASIGSIESRYANPAQSVSLICRNQINGAPPIVLR) directs the protein to the chloroplast. Helical transmembrane passes span 103–123 (MEIV…RVLY), 135–155 (FFLA…ILYF), 172–192 (LPFL…MAAA), 200–220 (TTVL…IFLG), 228–248 (ILGC…GSGA), 256–276 (GILW…DTVM), 304–324 (IFQV…WGIP), 351–371 (GAPL…ISLL), 387–407 (TVSV…LGVA), and 413–433 (GFVA…WTPS).

It belongs to the CRT-like transporter family.

The protein localises to the plastid. The protein resides in the chloroplast membrane. Involved in thiol transport from the plastid to the cytosol. Transports probably both glutathione (GSH) and its precursor, gamma-glutamylcysteine (gamma-EC). Exhibits some functional redundancy with CLT3 in maintaining the root GSH pool. This is Protein CLT1, chloroplastic from Arabidopsis thaliana (Mouse-ear cress).